The primary structure comprises 229 residues: Ribonuclease HII (229 aa).

Positions 42–229 (TRIAGVDEVG…KPVHKILYQE (188 aa)) constitute an RNase H type-2 domain. Residues D48, E49, and D139 each contribute to the a divalent metal cation site.

This sequence belongs to the RNase HII family. The cofactor is Mn(2+). Mg(2+) serves as cofactor.

It localises to the cytoplasm. The catalysed reaction is Endonucleolytic cleavage to 5'-phosphomonoester.. In terms of biological role, endonuclease that specifically degrades the RNA of RNA-DNA hybrids. This Ruegeria sp. (strain TM1040) (Silicibacter sp.) protein is Ribonuclease HII.